Here is a 207-residue protein sequence, read N- to C-terminus: Guanylate kinase (207 aa).

In terms of domain architecture, Guanylate kinase-like spans 4-184 (NMYYAISAPS…TLNKIKTIII (181 aa)). 11-18 (APSGTGKS) is an ATP binding site.

The protein belongs to the guanylate kinase family.

The protein resides in the cytoplasm. It carries out the reaction GMP + ATP = GDP + ADP. Its function is as follows. Essential for recycling GMP and indirectly, cGMP. The protein is Guanylate kinase of Wigglesworthia glossinidia brevipalpis.